The sequence spans 210 residues: ATP-dependent Clp protease proteolytic subunit (210 aa).

Ser106 functions as the Nucleophile in the catalytic mechanism. His131 is a catalytic residue.

Belongs to the peptidase S14 family. As to quaternary structure, fourteen ClpP subunits assemble into 2 heptameric rings which stack back to back to give a disk-like structure with a central cavity, resembling the structure of eukaryotic proteasomes.

The protein resides in the cytoplasm. The enzyme catalyses Hydrolysis of proteins to small peptides in the presence of ATP and magnesium. alpha-casein is the usual test substrate. In the absence of ATP, only oligopeptides shorter than five residues are hydrolyzed (such as succinyl-Leu-Tyr-|-NHMec, and Leu-Tyr-Leu-|-Tyr-Trp, in which cleavage of the -Tyr-|-Leu- and -Tyr-|-Trp bonds also occurs).. Functionally, cleaves peptides in various proteins in a process that requires ATP hydrolysis. Has a chymotrypsin-like activity. Plays a major role in the degradation of misfolded proteins. The protein is ATP-dependent Clp protease proteolytic subunit of Bartonella tribocorum (strain CIP 105476 / IBS 506).